The primary structure comprises 373 residues: Alanine racemase (373 aa).

Lys40 (proton acceptor; specific for D-alanine) is an active-site residue. The residue at position 40 (Lys40) is an N6-(pyridoxal phosphate)lysine. Arg140 is a binding site for substrate. Tyr268 functions as the Proton acceptor; specific for L-alanine in the catalytic mechanism. Met315 serves as a coordination point for substrate.

The protein belongs to the alanine racemase family. It depends on pyridoxal 5'-phosphate as a cofactor.

It catalyses the reaction L-alanine = D-alanine. Its pathway is amino-acid biosynthesis; D-alanine biosynthesis; D-alanine from L-alanine: step 1/1. Functionally, catalyzes the interconversion of L-alanine and D-alanine. May also act on other amino acids. This Levilactobacillus brevis (strain ATCC 367 / BCRC 12310 / CIP 105137 / JCM 1170 / LMG 11437 / NCIMB 947 / NCTC 947) (Lactobacillus brevis) protein is Alanine racemase (alr).